An 81-amino-acid polypeptide reads, in one-letter code: Small ribosomal subunit protein bS16 (81 aa).

The protein belongs to the bacterial ribosomal protein bS16 family.

This is Small ribosomal subunit protein bS16 from Clostridium perfringens (strain ATCC 13124 / DSM 756 / JCM 1290 / NCIMB 6125 / NCTC 8237 / Type A).